A 251-amino-acid polypeptide reads, in one-letter code: Phosphate import ATP-binding protein PstB 2 (251 aa).

The ABC transporter domain maps to 5–246 (ITTKDVHLYY…PDKEQTADYL (242 aa)). An ATP-binding site is contributed by 37 to 44 (GPSGCGKS).

The protein belongs to the ABC transporter superfamily. Phosphate importer (TC 3.A.1.7) family. As to quaternary structure, the complex is composed of two ATP-binding proteins (PstB), two transmembrane proteins (PstC and PstA) and a solute-binding protein (PstS).

The protein localises to the cell membrane. The enzyme catalyses phosphate(out) + ATP + H2O = ADP + 2 phosphate(in) + H(+). In terms of biological role, part of the ABC transporter complex PstSACB involved in phosphate import. Responsible for energy coupling to the transport system. This is Phosphate import ATP-binding protein PstB 2 from Ligilactobacillus salivarius (strain UCC118) (Lactobacillus salivarius).